The sequence spans 737 residues: 1,4-alpha-glucan branching enzyme GlgB (737 aa).

The active-site Nucleophile is D419. E472 functions as the Proton donor in the catalytic mechanism.

The protein belongs to the glycosyl hydrolase 13 family. GlgB subfamily. As to quaternary structure, monomer.

It carries out the reaction Transfers a segment of a (1-&gt;4)-alpha-D-glucan chain to a primary hydroxy group in a similar glucan chain.. Its pathway is glycan biosynthesis; glycogen biosynthesis. In terms of biological role, catalyzes the formation of the alpha-1,6-glucosidic linkages in glycogen by scission of a 1,4-alpha-linked oligosaccharide from growing alpha-1,4-glucan chains and the subsequent attachment of the oligosaccharide to the alpha-1,6 position. In Mesorhizobium japonicum (strain LMG 29417 / CECT 9101 / MAFF 303099) (Mesorhizobium loti (strain MAFF 303099)), this protein is 1,4-alpha-glucan branching enzyme GlgB.